Here is a 172-residue protein sequence, read N- to C-terminus: MDRAEKREFVAWLNGAFKESGSVVVAHYTGLTVAQMSDLRSKMRDAGGAVKVAKNRLAKIALQGTESEGIADLFTGQTVVAYANDPITAPKVAVEFAKANDKLVILGGAMGATTLNADGVKSLASLPSLDELRAKLVGMIQTPAQRLAVLTSAPAGQIARVIGAHARKNEAA.

The protein belongs to the universal ribosomal protein uL10 family. As to quaternary structure, part of the ribosomal stalk of the 50S ribosomal subunit. The N-terminus interacts with L11 and the large rRNA to form the base of the stalk. The C-terminus forms an elongated spine to which L12 dimers bind in a sequential fashion forming a multimeric L10(L12)X complex.

In terms of biological role, forms part of the ribosomal stalk, playing a central role in the interaction of the ribosome with GTP-bound translation factors. The chain is Large ribosomal subunit protein uL10 from Brucella suis (strain ATCC 23445 / NCTC 10510).